A 475-amino-acid polypeptide reads, in one-letter code: Arginine biosynthesis bifunctional protein ArgJ 1, mitochondrial (475 aa).

The substrate site is built by threonine 204, lysine 233, threonine 244, glutamate 331, asparagine 470, and threonine 475. Threonine 244 (nucleophile) is an active-site residue.

Belongs to the ArgJ family. In terms of assembly, heterodimer of an alpha and a beta chain. The alpha and beta chains are autoproteolytically processed from a single precursor protein within the mitochondrion.

It is found in the mitochondrion matrix. The catalysed reaction is N(2)-acetyl-L-ornithine + L-glutamate = N-acetyl-L-glutamate + L-ornithine. The enzyme catalyses L-glutamate + acetyl-CoA = N-acetyl-L-glutamate + CoA + H(+). Its pathway is amino-acid biosynthesis; L-arginine biosynthesis; L-ornithine and N-acetyl-L-glutamate from L-glutamate and N(2)-acetyl-L-ornithine (cyclic): step 1/1. The protein operates within amino-acid biosynthesis; L-arginine biosynthesis; N(2)-acetyl-L-ornithine from L-glutamate: step 1/4. Catalyzes two activities which are involved in the cyclic version of arginine biosynthesis: the synthesis of acetylglutamate from glutamate and acetyl-CoA, and of ornithine by transacetylation between acetylornithine and glutamate. In Botryotinia fuckeliana (strain B05.10) (Noble rot fungus), this protein is Arginine biosynthesis bifunctional protein ArgJ 1, mitochondrial.